The primary structure comprises 1197 residues: Probable DNA polymerase (1197 aa).

This sequence belongs to the DNA polymerase type-B family.

The protein resides in the mitochondrion. It catalyses the reaction DNA(n) + a 2'-deoxyribonucleoside 5'-triphosphate = DNA(n+1) + diphosphate. This chain is Probable DNA polymerase, found in Podospora anserina (Pleurage anserina).